Consider the following 264-residue polypeptide: Thymidylate synthase (264 aa).

R21 lines the dUMP pocket. H51 serves as a coordination point for (6R)-5,10-methylene-5,6,7,8-tetrahydrofolate. 126–127 lines the dUMP pocket; that stretch reads RR. The active-site Nucleophile is the C146. DUMP is bound by residues 166 to 169, N177, and 207 to 209; these read RSAD and HIY. D169 is a (6R)-5,10-methylene-5,6,7,8-tetrahydrofolate binding site. Position 263 (A263) interacts with (6R)-5,10-methylene-5,6,7,8-tetrahydrofolate.

Belongs to the thymidylate synthase family. Bacterial-type ThyA subfamily. In terms of assembly, homodimer.

Its subcellular location is the cytoplasm. It catalyses the reaction dUMP + (6R)-5,10-methylene-5,6,7,8-tetrahydrofolate = 7,8-dihydrofolate + dTMP. It participates in pyrimidine metabolism; dTTP biosynthesis. Its function is as follows. Catalyzes the reductive methylation of 2'-deoxyuridine-5'-monophosphate (dUMP) to 2'-deoxythymidine-5'-monophosphate (dTMP) while utilizing 5,10-methylenetetrahydrofolate (mTHF) as the methyl donor and reductant in the reaction, yielding dihydrofolate (DHF) as a by-product. This enzymatic reaction provides an intracellular de novo source of dTMP, an essential precursor for DNA biosynthesis. The chain is Thymidylate synthase from Brucella ovis (strain ATCC 25840 / 63/290 / NCTC 10512).